We begin with the raw amino-acid sequence, 182 residues long: ATP-dependent protease subunit HslV (182 aa).

Thr12 is a catalytic residue. Na(+) is bound by residues Ala167, Cys170, and Thr173.

It belongs to the peptidase T1B family. HslV subfamily. A double ring-shaped homohexamer of HslV is capped on each side by a ring-shaped HslU homohexamer. The assembly of the HslU/HslV complex is dependent on binding of ATP.

It localises to the cytoplasm. The enzyme catalyses ATP-dependent cleavage of peptide bonds with broad specificity.. Its activity is regulated as follows. Allosterically activated by HslU binding. Functionally, protease subunit of a proteasome-like degradation complex believed to be a general protein degrading machinery. The polypeptide is ATP-dependent protease subunit HslV (Chlorobium luteolum (strain DSM 273 / BCRC 81028 / 2530) (Pelodictyon luteolum)).